Consider the following 100-residue polypeptide: Small ribosomal subunit protein uS14c (100 aa).

It belongs to the universal ribosomal protein uS14 family. Part of the 30S ribosomal subunit.

It is found in the plastid. Its subcellular location is the chloroplast. Its function is as follows. Binds 16S rRNA, required for the assembly of 30S particles. This chain is Small ribosomal subunit protein uS14c, found in Angiopteris evecta (Mule's foot fern).